The chain runs to 785 residues: Rho-GTPase-activating protein RGD3 (785 aa).

Ser-2 is subject to N-acetylserine. The 433-residue stretch at 31–463 folds into the F-BAR domain; sequence ISLRNTYWTK…PQETANADVR (433 aa). The disordered stretch occupies residues 313–340; the sequence is SNGNAGNRKKKSYGELTHSDNEHEEKSN. Over residues 329-339 the composition is skewed to basic and acidic residues; it reads THSDNEHEEKS. Residues 520–702 form the Rho-GAP domain; the sequence is IILRQIEKEP…TFFINERTVE (183 aa). The segment at 732–785 is disordered; it reads TAPIHSTPKPPPNDKDGHFIPRPFKTSSTPTTPERPKRKSGLFLPINVNDVPST. Ser-759 bears the Phosphoserine mark. 3 positions are modified to phosphothreonine: Thr-760, Thr-762, and Thr-763.

In terms of processing, phosphorylation at the C-terminus negatively regulates the activity and the polarized localization.

It localises to the cytoplasmic vesicle membrane. The protein localises to the cell membrane. It is found in the bud tip. Its subcellular location is the bud neck. Functionally, GTPase activating protein (GAP) for RHO3 and CDC42 that binds membranes through phosphatidylinositol 4,5-bisphosphate. Plays a key role in cell polarity. Modulates the RHO3 distribution at the plasma membrane and its polarity during growth. The sequence is that of Rho-GTPase-activating protein RGD3 from Saccharomyces cerevisiae (strain ATCC 204508 / S288c) (Baker's yeast).